Reading from the N-terminus, the 729-residue chain is Fatty acid oxidation complex subunit alpha (729 aa).

Residues 1-189 (MLYKGDTLYL…KIGLVDGVVK (189 aa)) are enoyl-CoA hydratase/isomerase. A substrate-binding site is contributed by Asp296. Residues 311–729 (ETPKQAAVLG…ARPVGDLKTA (419 aa)) are 3-hydroxyacyl-CoA dehydrogenase. Residues Met324, Asp343, 400–402 (VVE), Lys407, and Ser429 contribute to the NAD(+) site. His450 functions as the For 3-hydroxyacyl-CoA dehydrogenase activity in the catalytic mechanism. Asn453 serves as a coordination point for NAD(+). Substrate is bound by residues Asn500 and Tyr660. The segment at 708-729 (RHNEPYYPPVEPARPVGDLKTA) is disordered.

In the N-terminal section; belongs to the enoyl-CoA hydratase/isomerase family. The protein in the C-terminal section; belongs to the 3-hydroxyacyl-CoA dehydrogenase family. As to quaternary structure, heterotetramer of two alpha chains (FadB) and two beta chains (FadA).

The enzyme catalyses a (3S)-3-hydroxyacyl-CoA + NAD(+) = a 3-oxoacyl-CoA + NADH + H(+). The catalysed reaction is a (3S)-3-hydroxyacyl-CoA = a (2E)-enoyl-CoA + H2O. It carries out the reaction a 4-saturated-(3S)-3-hydroxyacyl-CoA = a (3E)-enoyl-CoA + H2O. It catalyses the reaction (3S)-3-hydroxybutanoyl-CoA = (3R)-3-hydroxybutanoyl-CoA. The enzyme catalyses a (3Z)-enoyl-CoA = a 4-saturated (2E)-enoyl-CoA. The catalysed reaction is a (3E)-enoyl-CoA = a 4-saturated (2E)-enoyl-CoA. It participates in lipid metabolism; fatty acid beta-oxidation. Its function is as follows. Involved in the aerobic and anaerobic degradation of long-chain fatty acids via beta-oxidation cycle. Catalyzes the formation of 3-oxoacyl-CoA from enoyl-CoA via L-3-hydroxyacyl-CoA. It can also use D-3-hydroxyacyl-CoA and cis-3-enoyl-CoA as substrate. This Escherichia coli O81 (strain ED1a) protein is Fatty acid oxidation complex subunit alpha.